The chain runs to 430 residues: Glutamate-1-semialdehyde 2,1-aminomutase 2 (430 aa).

Lys269 is modified (N6-(pyridoxal phosphate)lysine).

The protein belongs to the class-III pyridoxal-phosphate-dependent aminotransferase family. HemL subfamily. In terms of assembly, homodimer. Pyridoxal 5'-phosphate is required as a cofactor.

It localises to the cytoplasm. The catalysed reaction is (S)-4-amino-5-oxopentanoate = 5-aminolevulinate. It functions in the pathway porphyrin-containing compound metabolism; protoporphyrin-IX biosynthesis; 5-aminolevulinate from L-glutamyl-tRNA(Glu): step 2/2. This chain is Glutamate-1-semialdehyde 2,1-aminomutase 2, found in Lysinibacillus sphaericus (strain C3-41).